A 165-amino-acid chain; its full sequence is 3-isopropylmalate dehydratase small subunit (165 aa).

This sequence belongs to the LeuD family. LeuD type 2 subfamily. As to quaternary structure, heterodimer of LeuC and LeuD.

The catalysed reaction is (2R,3S)-3-isopropylmalate = (2S)-2-isopropylmalate. It functions in the pathway amino-acid biosynthesis; L-leucine biosynthesis; L-leucine from 3-methyl-2-oxobutanoate: step 2/4. Functionally, catalyzes the isomerization between 2-isopropylmalate and 3-isopropylmalate, via the formation of 2-isopropylmaleate. The protein is 3-isopropylmalate dehydratase small subunit of Saccharolobus islandicus (strain Y.G.57.14 / Yellowstone #1) (Sulfolobus islandicus).